A 3078-amino-acid chain; its full sequence is Probable polyketide synthase 34 (3078 aa).

In terms of domain architecture, Ketosynthase family 3 (KS3) spans 28 to 462 (SGDVAVIGIG…GSNVCLILSE (435 aa)). Residues Cys-200, His-339, and His-385 each act as for beta-ketoacyl synthase activity in the active site. Residues 665 to 698 (GVSADIIIGHSLGEISSSYCSGIIDFQTLCYLTY) are acyl/malonyl transferase. Ser-675 acts as the For acyl/malonyl transferase activity in catalysis. The N-terminal hotdog fold stretch occupies residues 954–1083 (HEKIKNEGPS…GNFSLTKHNI (130 aa)). A PKS/mFAS DH domain is found at 954 to 1264 (HEKIKNEGPS…CTIVGSNPDS (311 aa)). The active-site Proton acceptor; for dehydratase activity is the His-995. Residues 1099 to 1264 (NFTSISKQDL…CTIVGSNPDS (166 aa)) are C-terminal hotdog fold. Residue Asp-1171 is the Proton donor; for dehydratase activity of the active site. The segment at 1375-1396 (NINNNNNNNNNNNNNNNNNSNG) is disordered. In terms of domain architecture, Carrier spans 2541–2618 (DNNEIIRSTI…QSIEIIKSAH (78 aa)). The residue at position 2578 (Ser-2578) is an O-(pantetheine 4'-phosphoryl)serine. Disordered regions lie at residues 2617-2640 (AHNN…NNNN) and 2739-2761 (NKGS…DNNS). Low complexity predominate over residues 2619–2640 (NNNNNNNNNNNNNNNNNNNNNN). Residues 2621 to 2652 (NNNNNNNNNNNNNNNNNNNNLVKKEQQSLDEF) adopt a coiled-coil conformation.

The cofactor is pantetheine 4'-phosphate.

Functionally, probable polyketide synthase. The polypeptide is Probable polyketide synthase 34 (pks34) (Dictyostelium discoideum (Social amoeba)).